The chain runs to 646 residues: Zinc finger protein 503 (646 aa).

Positions 1-11 are enriched in polar residues; sequence MSTAPSLSALR. The segment at 1–70 is disordered; that stretch reads MSTAPSLSAL…PPSDPLRQAN (70 aa). Positions 16-28 are enriched in gly residues; the sequence is SGGGGGGGGGGGA. Over residues 34 to 52 the composition is skewed to low complexity; sequence SALSGNSSGPGPGSSPAGS. Ser-102 carries the post-translational modification Phosphoserine. The disordered stretch occupies residues 121-332; it reads SQIGKPDPSP…PSAPTSSSVL (212 aa). Positions 130–139 are enriched in low complexity; sequence PSSKLSSVAS. 2 stretches are compositionally biased toward gly residues: residues 140-152 and 189-205; these read NGGGAGGAGGGAA and GGGGGGGGGGGGGGGGV. The residue at position 209 (Lys-209) is an N6-acetyllysine. Polar residues predominate over residues 217–226; sequence ATCQPFTPRT. Residues 227–240 show a composition bias toward low complexity; the sequence is GSPSSSASACSPGG. 2 positions are modified to phosphoserine: Ser-231 and Ser-237. Residues 250–259 show a composition bias toward basic and acidic residues; it reads EGKDDKKDTD. Composition is skewed to gly residues over residues 260 to 277 and 300 to 315; these read VGGGGKGTGGASAEGGPT and GGPGGKALGSDCGGSS. A compositionally biased stretch (low complexity) spans 316–330; the sequence is GSSSGSGPSAPTSSS. The segment at 514 to 542 adopts a C2H2-type zinc-finger fold; it reads HICNWVSANGPCDKRFATSEELLSHLRTH. Arg-636 bears the Omega-N-methylarginine mark.

It belongs to the Elbow/Noc family.

The protein resides in the nucleus. In terms of biological role, may function as a transcriptional repressor. The polypeptide is Zinc finger protein 503 (ZNF503) (Homo sapiens (Human)).